Consider the following 610-residue polypeptide: tRNA uridine 5-carboxymethylaminomethyl modification enzyme MnmG (610 aa).

Position 14–19 (G14–G19) interacts with FAD. NAD(+) is bound at residue G274 to F288.

This sequence belongs to the MnmG family. As to quaternary structure, homodimer. Heterotetramer of two MnmE and two MnmG subunits. FAD is required as a cofactor.

The protein resides in the cytoplasm. Functionally, NAD-binding protein involved in the addition of a carboxymethylaminomethyl (cmnm) group at the wobble position (U34) of certain tRNAs, forming tRNA-cmnm(5)s(2)U34. The chain is tRNA uridine 5-carboxymethylaminomethyl modification enzyme MnmG from Chlamydia trachomatis serovar L2b (strain UCH-1/proctitis).